The following is a 255-amino-acid chain: Putative deoxyribonuclease tatdn3-B (255 aa).

6 residues coordinate Zn(2+): His11, His13, Glu106, His129, His152, and Asp199.

The protein belongs to the metallo-dependent hydrolases superfamily. TatD-type hydrolase family. Mn(2+) serves as cofactor. Requires Ca(2+) as cofactor. It depends on Mg(2+) as a cofactor. The cofactor is Zn(2+).

It is found in the nucleus. Its activity is regulated as follows. The 3'-exonuclease activity is sensitive to the metal ion present in the active site, whereas the AP endodeoxyribonuclease activity is observed in a variety of divalent metal cofactors. 3'-exoxonuclease activity is suppressed in the presence of Ca(2+), Zn(2+) and Ni(2+). In terms of biological role, exhibits 3'-exonuclease activities and apurinic/apyrimidinic (AP) endonuclease (in vitro). Show preferential AP endonuclease activity on double-stranded DNA substrates and 3'- exonuclease activity on single-stranded DNA. This chain is Putative deoxyribonuclease tatdn3-B (tatdn3-b), found in Xenopus laevis (African clawed frog).